We begin with the raw amino-acid sequence, 146 residues long: D-aminoacyl-tRNA deacylase (146 aa).

A Gly-cisPro motif, important for rejection of L-amino acids motif is present at residues 138–139; sequence GP.

This sequence belongs to the DTD family. In terms of assembly, homodimer.

It localises to the cytoplasm. The enzyme catalyses glycyl-tRNA(Ala) + H2O = tRNA(Ala) + glycine + H(+). The catalysed reaction is a D-aminoacyl-tRNA + H2O = a tRNA + a D-alpha-amino acid + H(+). In terms of biological role, an aminoacyl-tRNA editing enzyme that deacylates mischarged D-aminoacyl-tRNAs. Also deacylates mischarged glycyl-tRNA(Ala), protecting cells against glycine mischarging by AlaRS. Acts via tRNA-based rather than protein-based catalysis; rejects L-amino acids rather than detecting D-amino acids in the active site. By recycling D-aminoacyl-tRNA to D-amino acids and free tRNA molecules, this enzyme counteracts the toxicity associated with the formation of D-aminoacyl-tRNA entities in vivo and helps enforce protein L-homochirality. The protein is D-aminoacyl-tRNA deacylase of Xanthomonas axonopodis pv. citri (strain 306).